A 244-amino-acid polypeptide reads, in one-letter code: 1-(5-phosphoribosyl)-5-[(5-phosphoribosylamino)methylideneamino] imidazole-4-carboxamide isomerase (244 aa).

Aspartate 10 serves as the catalytic Proton acceptor. The Proton donor role is filled by aspartate 129.

The protein belongs to the HisA/HisF family.

It is found in the cytoplasm. It carries out the reaction 1-(5-phospho-beta-D-ribosyl)-5-[(5-phospho-beta-D-ribosylamino)methylideneamino]imidazole-4-carboxamide = 5-[(5-phospho-1-deoxy-D-ribulos-1-ylimino)methylamino]-1-(5-phospho-beta-D-ribosyl)imidazole-4-carboxamide. The protein operates within amino-acid biosynthesis; L-histidine biosynthesis; L-histidine from 5-phospho-alpha-D-ribose 1-diphosphate: step 4/9. The protein is 1-(5-phosphoribosyl)-5-[(5-phosphoribosylamino)methylideneamino] imidazole-4-carboxamide isomerase of Rhodococcus opacus (strain B4).